A 241-amino-acid polypeptide reads, in one-letter code: Homeobox protein TGIF2LX (241 aa).

Disordered stretches follow at residues 1–58 and 125–207; these read MEAA…GNLP and KTGK…ELVS. A compositionally biased stretch (polar residues) spans 10–39; that stretch reads ETQSPVQKDSPAKTQSPAQDTSIMSRNNAD. The segment at residues 48–111 is a DNA-binding region (homeobox; TALE-type); the sequence is EHKKKRKGNL…INARRRILPD (64 aa).

This sequence belongs to the TALE/TGIF homeobox family.

The protein resides in the nucleus. May have a transcription role in testis. The sequence is that of Homeobox protein TGIF2LX (TGIF2LX) from Pan troglodytes (Chimpanzee).